A 112-amino-acid chain; its full sequence is Cuticle protein AM1239 (112 aa).

The region spanning 16 to 85 is the Chitin-binding type R&amp;R domain; that stretch reads DGNFNYRFET…FIPTDHPLPA (70 aa). Residue Thr79 is glycosylated (O-linked (HexNAc) threonine).

As to expression, arthrodial membrane.

The protein is Cuticle protein AM1239 of Cancer pagurus (Rock crab).